A 326-amino-acid polypeptide reads, in one-letter code: Methyltransferase phqN (326 aa).

The protein belongs to the class I-like SAM-binding methyltransferase superfamily. Erg6/SMT family.

The protein operates within alkaloid biosynthesis. Methyltransferase; part of the gene cluster that mediates the biosynthesis of paraherquamide, a fungal indole alkaloid that belongs to a family of natural products containing a characteristic bicyclo[2.2.2]diazaoctane core. The first steps in the biosynthesis of paraherquamide is the production of the beta-methyl-proline precursor from L-isoleucine. They require oxidation of a terminally hydroxylated L-isoleucine to the corresponding aldehyde by enzymes which have still to be identified. Spontaneous cyclization and dehydration would yield the 4-methyl pyrolline-5-carboxylic acid, which is then reduced by the pyrroline-5-carboxylate reductase phqD leading to the beta-methyl-proline precursor. The next step of paraherquamide biosynthesis involves coupling of beta-methyl-proline and L-tryptophan by the bimodular NRPS phqB, to produce a monooxopiperazine intermediate. The reductase (R) domain of phqB utilizes NADPH for hydride transfer to reduce the thioester bond of the T domain-tethered linear dipeptide to a hemithioaminal intermediate, which spontaneously cleaves the C-S bond to release the aldehyde product. This compound undergoes spontaneous cyclization and dehydration to give a dienamine which is reverse prenylated at C-2 by the reverse prenyltransferase phqJ. The other prenyltransferase present in the cluster, phqI may be a redundant gene in the pathway. During biosynthetic assembly, the key step to produce the polycyclic core is catalyzed by the bifunctional reductase and intramolecular [4+2] Diels-Alderase, phqE, resulting in formation of the [2.2.2] diazaoctane intermediate preparaherquamide. Following formation of preparaherquamide, an indole 2,3-epoxidation-initiated pinacol-like rearrangement is catalyzed by the phqK FAD-dependent monooxygenase. The prenyltransferase phqA, the cytochrome P450 monooxygenase phqL, and the FAD-linked oxidoreductase phqH (or the cytochrome P450 monooxygenase phqM), are proposed to be involved in the formation of the pyran ring. The FAD-dependent monooxygenase phqK is likely responsible for generation of the spiro-oxindole, and the N-methylation is likely mediated by the phqN methyltransferase leading to the isolable natural product paraherquamide F. However, the order of these biosynthetic steps has still to be determined. In late-stage paraherquamide biosynthesis, the third P450 monooxygenase, phqO, is probably responsible for the C-14 hydroxylation, transforming paraherquamide F to paraherquamide G, and paraherquamide E to the final product paraherquamide A. The expansion from the 6-membered ring pyran (in paraherquamides F and G) to the 7-membered dioxepin ring (in paraherquamides A and E) represents a poorly understood but intriguing process that probably involves the 2-oxoglutarate-dependent dioxygenase phqC. Finally, the remaining members of the paraherquamide cluster, including phqI as well as phqM (or phqH), do not have a clearly prescribed role and appear to be redundant. The polypeptide is Methyltransferase phqN (Penicillium fellutanum).